The chain runs to 597 residues: Elongation factor 4 (597 aa).

Positions 2–184 (KHIRNFSIIA…NIVSAIPAPE (183 aa)) constitute a tr-type G domain. GTP contacts are provided by residues 14-19 (DHGKST) and 131-134 (NKID).

Belongs to the TRAFAC class translation factor GTPase superfamily. Classic translation factor GTPase family. LepA subfamily.

It is found in the cell inner membrane. It catalyses the reaction GTP + H2O = GDP + phosphate + H(+). In terms of biological role, required for accurate and efficient protein synthesis under certain stress conditions. May act as a fidelity factor of the translation reaction, by catalyzing a one-codon backward translocation of tRNAs on improperly translocated ribosomes. Back-translocation proceeds from a post-translocation (POST) complex to a pre-translocation (PRE) complex, thus giving elongation factor G a second chance to translocate the tRNAs correctly. Binds to ribosomes in a GTP-dependent manner. The polypeptide is Elongation factor 4 (Vibrio parahaemolyticus serotype O3:K6 (strain RIMD 2210633)).